Reading from the N-terminus, the 263-residue chain is MAVNVYSTSVTSDNLSRHDMLAWINESLQLTLTKIEQLCSGAAYCQFMDMLFPGSVALKKVKFQAKLEHEYIQNFKVLQAGFKRMGVDKIIPVDKLVKGKFQDNFEFVQWFKKFFDANYDGKEYDPVAARQGQETVAPNLVAPVMNKPKKPLGTGSAAPQRPIVAQRTPATPKGGTGMVKKAAGDDESAGLIEQINVLKLTVEDLEKERDFYFGKLRNIELICQENEGENDPVLQRIVEILYATDEGFVIPDEGAPQEEQEEY.

Positions 14 to 116 constitute a Calponin-homology (CH) domain; it reads NLSRHDMLAW…FVQWFKKFFD (103 aa). In terms of domain architecture, EB1 C-terminal spans 180 to 250; sequence KKAAGDDESA…LYATDEGFVI (71 aa).

This sequence belongs to the MAPRE family.

It localises to the cytoplasm. The protein resides in the cytoskeleton. Its subcellular location is the microtubule organizing center. The protein localises to the centrosome. It is found in the golgi apparatus. It localises to the spindle. The protein resides in the spindle pole. Functionally, plus-end tracking protein (+TIP) that binds to the plus-end of microtubules and regulates the dynamics of the microtubule cytoskeleton. Promotes cytoplasmic microtubule nucleation and elongation. Involved in mitotic spindle positioning by stabilizing microtubules and promoting dynamic connection between astral microtubules and the cortex during mitotic chromosome segregation. This is Microtubule-associated protein RP/EB family member 1 (MAPRE1) from Coturnix coturnix (Common quail).